Here is an 86-residue protein sequence, read N- to C-terminus: Kappa-theraphotoxin-Cg1a 6 (86 aa).

The first 21 residues, Met1 to Ala21, serve as a signal peptide directing secretion. Residues Ala22 to Arg50 constitute a propeptide that is removed on maturation. Intrachain disulfides connect Cys52/Cys66, Cys59/Cys71, and Cys65/Cys78. Phe84 bears the Phenylalanine amide mark.

Belongs to the neurotoxin 10 (Hwtx-1) family. 28 (Jztx-11) subfamily. In terms of tissue distribution, expressed by the venom gland.

It localises to the secreted. In terms of biological role, this toxin acts as a voltage-dependent gating-modifier. It inhibits the sodium conductance (IC(50)=124 nM) and slows the fast inactivation (EC(50)=1180 nM) of Nav1.5/SCN5A. It significantly shifts the activation to more depolarized voltages and decreases the deactivation of Nav1.5 currents upon extreme depolarization, but only slightly affects voltage-dependence of steady-state inactivation. In addition, this toxin causes an approximately five-fold decrease in the rate of recovery from inactivation and an approximately 1.9-fold reduction in the closed-state inactivation rate. This toxin integrates the functions of site 3 toxins (alpha-scorpion toxins) with site 4 toxins (beta-scorpion and spider toxins) by targeting multiple sites on Nav1.5. Also shows inhibition of voltage-gated potassium channels (5 uM completely inhibits Kv2.1/KCNB1, whereas 5 uM moderately inhibits Kv4.2/KCND2 Kv4.1/KCND1 channels). The sequence is that of Kappa-theraphotoxin-Cg1a 6 from Chilobrachys guangxiensis (Chinese earth tiger tarantula).